Reading from the N-terminus, the 378-residue chain is Pyrimidine monooxygenase RutA (378 aa).

FMN is bound by residues Ile-65–Lys-66, Asn-131, Glu-140, Arg-156–Tyr-157, and Ser-206.

Belongs to the NtaA/SnaA/DszA monooxygenase family. RutA subfamily.

The enzyme catalyses uracil + FMNH2 + NADH + O2 = (Z)-3-ureidoacrylate + FMN + NAD(+) + H2O + H(+). The catalysed reaction is thymine + FMNH2 + NADH + O2 = (Z)-2-methylureidoacrylate + FMN + NAD(+) + H2O + H(+). Catalyzes the pyrimidine ring opening between N-3 and C-4 by an unusual flavin hydroperoxide-catalyzed mechanism, adding oxygen atoms in the process to yield ureidoacrylate peracid, that immediately reacts with FMN forming ureidoacrylate and FMN-N(5)-oxide. The FMN-N(5)-oxide reacts spontaneously with NADH to produce FMN. Requires the flavin reductase RutF to regenerate FMN in vivo. The sequence is that of Pyrimidine monooxygenase RutA from Cronobacter turicensis (strain DSM 18703 / CCUG 55852 / LMG 23827 / z3032).